Reading from the N-terminus, the 308-residue chain is Pseudouridine-5'-phosphate glycosidase (308 aa).

Glu-28 acts as the Proton donor in catalysis. The substrate site is built by Lys-89 and Val-109. Asp-141 contributes to the Mn(2+) binding site. 143–145 (SAD) is a binding site for substrate. Catalysis depends on Lys-162, which acts as the Nucleophile.

This sequence belongs to the pseudouridine-5'-phosphate glycosidase family. Homotrimer. Requires Mn(2+) as cofactor.

The enzyme catalyses D-ribose 5-phosphate + uracil = psi-UMP + H2O. Catalyzes the reversible cleavage of pseudouridine 5'-phosphate (PsiMP) to ribose 5-phosphate and uracil. Functions biologically in the cleavage direction, as part of a pseudouridine degradation pathway. This chain is Pseudouridine-5'-phosphate glycosidase, found in Brachyspira hyodysenteriae (strain ATCC 49526 / WA1).